Reading from the N-terminus, the 397-residue chain is Lysophospholipid transporter LplT (397 aa).

Over 1-17 (MSESVHTNTSLWSKGMK) the chain is Periplasmic. The chain crosses the membrane as a helical span at residues 18–38 (AVIVAQFLSAFGDNALLFATL). The Cytoplasmic segment spans residues 39-52 (ALLKAQFYPEWSQP). A helical membrane pass occupies residues 53–73 (ILQMVFVGAYILFAPFVGQVA). The Periplasmic portion of the chain corresponds to 74–90 (DSFAKGRVMMFANGLKL). The helical transmembrane segment at 91-111 (LGAASICFGINPFLGYTLVGV) threads the bilayer. At 112–144 (GAAAYSPAKYGILGELTTGSKLVKANGLMEAST) the chain is on the cytoplasmic side. The chain crosses the membrane as a helical span at residues 145–165 (IAAILLGSVAGGVLADWHVLV). A topological domain (periplasmic) is located at residue alanine 166. Residues 167-187 (LAACALAYGGAVVANIYIPKL) traverse the membrane as a helical segment. At 188–226 (AAARPGQSWNLINMTRSFLNACTSLWRNGETRFSLVGTS) the chain is on the cytoplasmic side. Residues 227-247 (LFWGAGVTLRFLLVLWVPVAL) traverse the membrane as a helical segment. At 248–256 (GITDNSTPT) the chain is on the periplasmic side. Residues 257–277 (YLNAMVAIGIVVGAGAAAKLV) form a helical membrane-spanning segment. At 278 to 280 (TLE) the chain is on the cytoplasmic side. The helical transmembrane segment at 281–301 (TVSRCMPAGILIGVVVLIFSL) threads the bilayer. Topologically, residues 302 to 304 (QHE) are periplasmic. A helical transmembrane segment spans residues 305-325 (LLPAYALLMLIGVMGGFFVVP). Residues 326 to 343 (LNALLQERGKKSVGAGNA) lie on the Cytoplasmic side of the membrane. A helical transmembrane segment spans residues 344–364 (IAVQNLGENSAMLLMLGIYSL). At 365–366 (AV) the chain is on the periplasmic side. The helical transmembrane segment at 367 to 387 (MVGIPVVPIGIGFGALFALAI) threads the bilayer. Residues 388–397 (TALWIWQRRH) are Cytoplasmic-facing.

It belongs to the major facilitator superfamily. LplT (TC 2.A.1.42) family.

Its subcellular location is the cell inner membrane. Catalyzes the facilitated diffusion of 2-acyl-glycero-3-phosphoethanolamine (2-acyl-GPE) into the cell. This Shigella boydii serotype 4 (strain Sb227) protein is Lysophospholipid transporter LplT.